The chain runs to 555 residues: Dimethylaniline monooxygenase [N-oxide-forming] 4 (555 aa).

FAD contacts are provided by residues 9–13 (GAGVS), glutamate 32, and 40–41 (LW). NADP(+) contacts are provided by residues 60–61 (TN) and 195–198 (SGGD). A helical membrane pass occupies residues 515-532 (YLKVWGAPLLLASVLLIC).

Belongs to the FMO family. Requires FAD as cofactor. In terms of tissue distribution, kidney and liver.

The protein localises to the microsome membrane. Its subcellular location is the endoplasmic reticulum membrane. It catalyses the reaction N,N-dimethylaniline + NADPH + O2 + H(+) = N,N-dimethylaniline N-oxide + NADP(+) + H2O. Functionally, this protein is involved in the oxidative metabolism of a variety of xenobiotics such as drugs and pesticides. The protein is Dimethylaniline monooxygenase [N-oxide-forming] 4 (FMO4) of Oryctolagus cuniculus (Rabbit).